Consider the following 162-residue polypeptide: NADH-quinone oxidoreductase subunit I (162 aa).

4Fe-4S ferredoxin-type domains are found at residues 52–82 (LRRY…IEAG) and 93–122 (TRYD…EGPN). [4Fe-4S] cluster-binding residues include C62, C65, C68, C72, C102, C105, C108, and C112.

The protein belongs to the complex I 23 kDa subunit family. NDH-1 is composed of 14 different subunits. Subunits NuoA, H, J, K, L, M, N constitute the membrane sector of the complex. [4Fe-4S] cluster serves as cofactor.

The protein localises to the cell inner membrane. It carries out the reaction a quinone + NADH + 5 H(+)(in) = a quinol + NAD(+) + 4 H(+)(out). Its function is as follows. NDH-1 shuttles electrons from NADH, via FMN and iron-sulfur (Fe-S) centers, to quinones in the respiratory chain. The immediate electron acceptor for the enzyme in this species is believed to be ubiquinone. Couples the redox reaction to proton translocation (for every two electrons transferred, four hydrogen ions are translocated across the cytoplasmic membrane), and thus conserves the redox energy in a proton gradient. This is NADH-quinone oxidoreductase subunit I from Methylobacterium radiotolerans (strain ATCC 27329 / DSM 1819 / JCM 2831 / NBRC 15690 / NCIMB 10815 / 0-1).